The following is a 156-amino-acid chain: Extracellular giant hemoglobin major globin subunit A1 (156 aa).

Residues 1–16 (MKVLIIFACLVVMASA) form the signal peptide. Residues 17–156 (VCNRLEQILV…YERIASGISG (140 aa)) enclose the Globin domain. Residues C18 and C146 are joined by a disulfide bond. Hydrogen sulfide is bound at residue C79. H110 contributes to the heme b binding site.

The protein belongs to the globin family. The 400 kDa hemoglobin consists of a spherical 24-mer arranged as a double layer of dome-shaped dodecamers. Each dodecamer is composed of the 3-fold trimer of the tetramer A1-A2-B1-B2 having one intra-tetramer (A1-B2) disulfide bond and one inter-tetramer (B1-B2) disulfide bond per tetramer.

It localises to the secreted. Functionally, the extracellular giant hemoglobin is able to bind and transport oxygen and hydrosulfide simultaneously and reversibly at two different sites. The chain is Extracellular giant hemoglobin major globin subunit A1 (ghbA1) from Oligobrachia mashikoi (Beard worm).